Here is a 640-residue protein sequence, read N- to C-terminus: Threonine--tRNA ligase (640 aa).

The TGS domain maps to 1 to 61; that stretch reads MPTITLPDGS…DSDATLQIIT (61 aa). The interval 242–533 is catalytic; it reads DHRKIGKRLG…LIEHYEGAFP (292 aa). 3 residues coordinate Zn(2+): Cys333, His384, and His510.

This sequence belongs to the class-II aminoacyl-tRNA synthetase family. Homodimer. It depends on Zn(2+) as a cofactor.

Its subcellular location is the cytoplasm. The catalysed reaction is tRNA(Thr) + L-threonine + ATP = L-threonyl-tRNA(Thr) + AMP + diphosphate + H(+). Its function is as follows. Catalyzes the attachment of threonine to tRNA(Thr) in a two-step reaction: L-threonine is first activated by ATP to form Thr-AMP and then transferred to the acceptor end of tRNA(Thr). Also edits incorrectly charged L-seryl-tRNA(Thr). This chain is Threonine--tRNA ligase, found in Pseudomonas fluorescens (strain Pf0-1).